Here is a 291-residue protein sequence, read N- to C-terminus: Glucose and ribitol dehydrogenase (291 aa).

Positions 1-35 (MASGGQFPPQKQESQPGKEHLMDPSPQHASPHYKP) are disordered. 45–69 (LVTGGDSGIGRSVCYHFALEGATVA) is a binding site for NAD(+). Residue Ser183 coordinates substrate. Residue Tyr196 is the Proton acceptor of the active site.

The protein belongs to the short-chain dehydrogenases/reductases (SDR) family. In terms of tissue distribution, expressed in embryogenic cells, somatic embryos and seeds in the later stages of development, but not in non-embryogenic cells and mature leaves.

In terms of biological role, may act as a short alcohol-polyol-sugar dehydrogenase possibly related to carbohydrate metabolism and the acquisition of desiccation tolerance. May also be involved in signal transduction. This is Glucose and ribitol dehydrogenase (CAISE5) from Daucus carota (Wild carrot).